The chain runs to 101 residues: Small ribosomal subunit protein uS14 (101 aa).

The interval 51 to 70 (LPRDSSPSRQRNRCSQTGRP) is disordered. A compositionally biased stretch (polar residues) spans 52–68 (PRDSSPSRQRNRCSQTG).

This sequence belongs to the universal ribosomal protein uS14 family. As to quaternary structure, part of the 30S ribosomal subunit. Contacts proteins S3 and S10.

In terms of biological role, binds 16S rRNA, required for the assembly of 30S particles and may also be responsible for determining the conformation of the 16S rRNA at the A site. The protein is Small ribosomal subunit protein uS14 of Mannheimia succiniciproducens (strain KCTC 0769BP / MBEL55E).